The following is a 327-amino-acid chain: Thioredoxin reductase (327 aa).

Residues 10–13 (SGPA), 39–40 (IA), Q44, N53, V86, C143, D286, and 293–295 (RQA) each bind FAD. An intrachain disulfide couples C140 to C143.

Belongs to the class-II pyridine nucleotide-disulfide oxidoreductase family. In terms of assembly, homodimer. It depends on FAD as a cofactor.

It localises to the cytoplasm. The enzyme catalyses [thioredoxin]-dithiol + NADP(+) = [thioredoxin]-disulfide + NADPH + H(+). In terms of biological role, component of the thioredoxin-thioredoxin reductase system which may be involved in biosynthesis of penicillins and cephalosporins and may be important in determining the thiol-disulfide redox balance. This Pneumocystis jirovecii (Human pneumocystis pneumonia agent) protein is Thioredoxin reductase (TRR1).